Reading from the N-terminus, the 284-residue chain is Tryptophan 2,3-dioxygenase (284 aa).

Residues 51–55, Tyr-113, and Arg-117 each bind substrate; that span reads FIIQH. A heme-binding site is contributed by His-240. Position 254 (Thr-254) interacts with substrate.

Belongs to the tryptophan 2,3-dioxygenase family. In terms of assembly, homotetramer. Heme serves as cofactor.

The catalysed reaction is L-tryptophan + O2 = N-formyl-L-kynurenine. Its pathway is amino-acid degradation; L-tryptophan degradation via kynurenine pathway; L-kynurenine from L-tryptophan: step 1/2. Heme-dependent dioxygenase that catalyzes the oxidative cleavage of the L-tryptophan (L-Trp) pyrrole ring and converts L-tryptophan to N-formyl-L-kynurenine. Catalyzes the oxidative cleavage of the indole moiety. The sequence is that of Tryptophan 2,3-dioxygenase from Arthrobacter sp. (strain FB24).